We begin with the raw amino-acid sequence, 286 residues long: Main hemagglutinin component type C (286 aa).

One copy of the 1-alpha repeat lies at 2–55 (SQTNANDLRNNEVFFISPSNNTNKVLDKISQSEVKLWNKLSGANQKWRLIYDTN). Ricin B-type lectin domains follow at residues 12–140 (NEVF…FKFS) and 180–284 (DSSR…WIIN). One copy of the 1-beta repeat lies at 56-100 (KQAYKIKVMDNTSLILTWNAPLSSVSVKTDTNGDNQYWYLLQNYI). A 1-gamma repeat occupies 101 to 148 (SRNVIIRNYMNPNLVLQYNIDDTLMVSTQTSSSNQFFKFSNCIYEALN). A 2-alpha repeat occupies 149–193 (NRNCKLQTQLNSDRFLSKNLNSQIIVLWQWFDSSRQKWIIEYNET). A sugar-binding site 1 region spans residues 167–183 (NLNSQIIVLWQWFDSSR). One copy of the 2-beta repeat lies at 194-239 (KSAYTLKCQENNRYLTWIQNSNNYVETYQSTDSLIQYWNINYLDND). The 2-gamma repeat unit spans residues 240–286 (ASKYILYNLQDTNRVLDVYNSQIANGTHVIVDSYHGNTNQQWIINLI). The sugar-binding site 2 stretch occupies residues 256–279 (DVYNSQIANGTHVIVDSYHGNTNQ).

Botulinum toxins are produced as progenitor toxins of large molecular sizes of 12S (M toxin) and 16S (L toxin). M toxin consists of a non-toxic, non-hemagglutinin component (NTNHA) and the neurotoxin. L toxin consists of the M toxin and the 3 subcomponents of hemagglutinin (HA). HA is composed of subcomponents of 70, 33, and 17 kDa. The 70 kDa subcomponent undergoes proteolytic processing and is split into HA-55 (also called HA-53 and HA3b) and HA-22-23 (also called HA3a). The stoichiometry of the whole complex has been modeled as one BoNT/C, one NTNHA, three HA-70, six HA-33 and three HA-17.

The protein resides in the secreted. Functionally, agglutinates human erythrocytes. The hemagglutinin (HA) component of the progenitor toxin protects the structural integrity of botulinum neurotoxin; may increase internalization of the neurotoxin into the bloodstream of the host. The hemagglutinin (HA) component is involved in binding to the upper small intestine through interactions with glycolipids and glycoproteins containing sialic acid moieties. Binds galactose or oligosaccharides with galactose at their non-reducing end. Binds eukaryotic host mucins; binding is inhibited by N-acetyl-beta-neuraminic acid, N-acetyl-D-galactosamine, galactose, and methyl N-acetyl-beta-neuraminic acid. Binds N-acetyl-beta-neuraminic acid, N-acetyl-D-galactosamine and galactose (but not glucose) via 2 sites. The sequence is that of Main hemagglutinin component type C from Clostridium botulinum C (Clostridium botulinum C bacteriophage).